A 543-amino-acid polypeptide reads, in one-letter code: Probable malate:quinone oxidoreductase (543 aa).

Belongs to the MQO family. It depends on FAD as a cofactor.

The enzyme catalyses (S)-malate + a quinone = a quinol + oxaloacetate. It functions in the pathway carbohydrate metabolism; tricarboxylic acid cycle; oxaloacetate from (S)-malate (quinone route): step 1/1. The polypeptide is Probable malate:quinone oxidoreductase (Acinetobacter baylyi (strain ATCC 33305 / BD413 / ADP1)).